The chain runs to 660 residues: Pseudouridylate synthase 7 homolog (660 aa).

The segment at methionine 1 to serine 99 is disordered. A Phosphoserine modification is found at serine 7. Positions threonine 22–valine 32 are enriched in basic and acidic residues. The segment covering glutamine 76–serine 99 has biased composition (acidic residues). Serine 126 bears the Phosphoserine mark. Aspartate 293 functions as the Nucleophile in the catalytic mechanism. The 211-residue stretch at glycine 369–arginine 579 folds into the TRUD domain.

It belongs to the pseudouridine synthase TruD family. In terms of assembly, interacts with SIRT1.

The protein localises to the nucleus. It catalyses the reaction a uridine in tRNA = a pseudouridine in tRNA. The enzyme catalyses uridine(13) in tRNA = pseudouridine(13) in tRNA. It carries out the reaction a uridine in mRNA = a pseudouridine in mRNA. Functionally, pseudouridylate synthase that catalyzes pseudouridylation of RNAs. Acts as a regulator of protein synthesis in embryonic stem cells by mediating pseudouridylation of RNA fragments derived from tRNAs (tRFs): pseudouridylated tRFs inhibit translation by targeting the translation initiation complex. Also catalyzes pseudouridylation of mRNAs: mediates pseudouridylation of mRNAs with the consensus sequence 5'-UGUAG-3'. Acts as a regulator of pre-mRNA splicing by mediating pseudouridylation of pre-mRNAs at locations associated with alternatively spliced regions. Pseudouridylation of pre-mRNAs near splice sites directly regulates mRNA splicing and mRNA 3'-end processing. In addition to mRNAs and tRNAs, binds other types of RNAs, such as snRNAs, Y RNAs and vault RNAs, suggesting that it can catalyze pseudouridylation of many RNA types. This chain is Pseudouridylate synthase 7 homolog, found in Mus musculus (Mouse).